Reading from the N-terminus, the 197-residue chain is Probable chemoreceptor glutamine deamidase CheD 2 (197 aa).

Belongs to the CheD family.

It carries out the reaction L-glutaminyl-[protein] + H2O = L-glutamyl-[protein] + NH4(+). Probably deamidates glutamine residues to glutamate on methyl-accepting chemotaxis receptors (MCPs), playing an important role in chemotaxis. The chain is Probable chemoreceptor glutamine deamidase CheD 2 from Dechloromonas aromatica (strain RCB).